Here is a 375-residue protein sequence, read N- to C-terminus: N5-carboxyaminoimidazole ribonucleotide synthase (375 aa).

Residues Arg108, Lys148, Gly153–Gln159, Glu183–Leu186, Glu191, His214, and Asn266–Glu267 contribute to the ATP site. Residues Lys112–Thr296 enclose the ATP-grasp domain.

This sequence belongs to the PurK/PurT family. Homodimer.

It carries out the reaction 5-amino-1-(5-phospho-beta-D-ribosyl)imidazole + hydrogencarbonate + ATP = 5-carboxyamino-1-(5-phospho-D-ribosyl)imidazole + ADP + phosphate + 2 H(+). Its pathway is purine metabolism; IMP biosynthesis via de novo pathway; 5-amino-1-(5-phospho-D-ribosyl)imidazole-4-carboxylate from 5-amino-1-(5-phospho-D-ribosyl)imidazole (N5-CAIR route): step 1/2. Catalyzes the ATP-dependent conversion of 5-aminoimidazole ribonucleotide (AIR) and HCO(3)(-) to N5-carboxyaminoimidazole ribonucleotide (N5-CAIR). In Staphylococcus epidermidis (strain ATCC 35984 / DSM 28319 / BCRC 17069 / CCUG 31568 / BM 3577 / RP62A), this protein is N5-carboxyaminoimidazole ribonucleotide synthase.